A 248-amino-acid chain; its full sequence is Probable transcriptional regulatory protein Nham_3525 (248 aa).

A disordered region spans residues 1–21 (MAGHSQFKNIMHRKGRQDAQK).

Belongs to the TACO1 family.

It is found in the cytoplasm. This chain is Probable transcriptional regulatory protein Nham_3525, found in Nitrobacter hamburgensis (strain DSM 10229 / NCIMB 13809 / X14).